The primary structure comprises 485 residues: Trk system potassium uptake protein TrkH (485 aa).

Residues 1–2 are Cytoplasmic-facing; it reads MQ. Residues 3 to 29 traverse the membrane as a helical segment; the sequence is FRSIIRIVGLLLALFSVTMLAPALVAL. Over 30 to 35 the chain is Periplasmic; sequence LYRDGA. Residues 36-57 traverse the membrane as a helical segment; sequence GVPFVTTFFVLLFCGAMCWFPN. Topologically, residues 58–65 are cytoplasmic; it reads RRHKHELK. Residues 66-90 traverse the membrane as a helical segment; that stretch reads SRDGFLIVVLFWTVLGSAGSLPFLI. The helical; Pore-forming intramembrane region spans 98 to 109; it reads VTDAFFESFSAL. Residues 110–115 lie within the membrane without spanning it; it reads TTTGAT. The tract at residues 110 to 115 is selectivity filter part 1; it reads TTTGAT. Residues T111 and T112 each coordinate K(+). Residues 116-124 lie on the Periplasmic side of the membrane; the sequence is VIVGLDELP. A helical transmembrane segment spans residues 125 to 150; that stretch reads KAILFYRQFLQWFGGMGIIVLAVAIL. The Cytoplasmic segment spans residues 151 to 177; sequence PVLGIGGMQLYRAEIPGPVKDTKMTPR. Residues 178–202 traverse the membrane as a helical segment; sequence IAETAKALWYIYLSLTIACAVAFWL. Residues 203–205 are Periplasmic-facing; the sequence is AGM. Residue T206 is an intramembrane region. The segment at residues 207-218 is an intramembrane region (helical; Pore-forming); the sequence is PFDAISHSFSTI. An intramembrane segment occupies 219–224; that stretch reads AIGGFS. A selectivity filter part 2 region spans residues 219-224; it reads AIGGFS. K(+) contacts are provided by I220 and G221. Residues 225-234 are Periplasmic-facing; it reads THDASMGYFD. Residues 235-250 constitute an intramembrane region (helical); it reads SYAINLITVVFLLISA. A helical membrane pass occupies residues 276 to 296; the sequence is FRAFIFIQVLLFLVCFLLLLK. An intramembrane region (helical; Pore-forming) is located at residues 303 to 318; it reads PYDAFDQALFQTVSIS. The stretch at 319 to 324 is an intramembrane region; it reads TTAGFT. A selectivity filter part 3 region spans residues 319-324; sequence TTAGFT. Residues T320 and A321 each coordinate K(+). Residues 325–332 lie on the Periplasmic side of the membrane; that stretch reads TTGFADWP. The helical intramembrane region spans 333-344; that stretch reads LFLPVLLLFSSF. Residues 345–357 constitute an intramembrane region (note=Loop between two helices); the sequence is IGGCAGSTGGGMK. Residues 392–419 traverse the membrane as a helical segment; sequence PQRVVDAVWGFFSAYALVFVVCMLGLIA. Residues 420-421 lie on the Periplasmic side of the membrane; that stretch reads TG. Residues 422 to 423 lie within the membrane without spanning it; it reads MD. Positions 424-434 form an intramembrane region, helical; Pore-forming; sequence ELSAFSAVAAT. The stretch at 435 to 441 is an intramembrane region; sequence LNNLGPG. The tract at residues 436–441 is selectivity filter part 4; the sequence is NNLGPG. Positions 437 and 438 each coordinate K(+). At 442 to 453 the chain is on the periplasmic side; sequence LGEVALHFGDVN. The helical intramembrane region spans 454 to 465; sequence DKAKWVLIVSML.

The protein belongs to the TrkH potassium transport family. In terms of assembly, homodimer.

It localises to the cell inner membrane. In terms of biological role, low-affinity potassium transport system. Interacts with trk system potassium uptake protein TrkA and requires TrkE for transport activity. Selective for permeation of potassium ion and rubidium ion over smaller ions such as natrium or litium. This chain is Trk system potassium uptake protein TrkH, found in Vibrio parahaemolyticus serotype O3:K6 (strain RIMD 2210633).